The chain runs to 581 residues: Frizzled-10 (581 aa).

An N-terminal signal peptide occupies residues 1-20 (MQRPGPRLWLVLQVMGSCAA). Over 21–225 (ISSMDMERPG…DVYWSREDKR (205 aa)) the chain is Extracellular. The FZ domain maps to 29-150 (PGDGKCQPIE…NDPNYLCMEA (122 aa)). Cystine bridges form between Cys34/Cys95, Cys42/Cys88, Cys79/Cys117, Cys106/Cys147, and Cys110/Cys134. A glycan (N-linked (GlcNAc...) asparagine) is linked at Asn48. Asn153 is a glycosylation site (N-linked (GlcNAc...) asparagine). The helical transmembrane segment at 226 to 246 (FAVVWLAIWAVLCFFSSAFTV) threads the bilayer. The Cytoplasmic segment spans residues 247-262 (LTFLIDPARFRYPERP). Residues 263 to 283 (IIFLSMCYCVYSVGYLIRLFA) form a helical membrane-spanning segment. The Extracellular segment spans residues 284–311 (GAESIACDRDSGQLYVIQEGLESTGCTL). Residues 312 to 332 (VFLVLYYFGMASSLWWVVLTL) traverse the membrane as a helical segment. At 333–351 (TWFLAAGKKWGHEAIEANS) the chain is on the cytoplasmic side. The helical transmembrane segment at 352–372 (SYFHLAAWAIPAVKTILILVM) threads the bilayer. The Extracellular segment spans residues 373–393 (RRVAGDELTGVCYVGSMDVNA). The chain crosses the membrane as a helical span at residues 394–414 (LTGFVLIPLACYLVIGTSFIL). The Cytoplasmic segment spans residues 415-443 (SGFVALFHIRRVMKTGGENTDKLEKLMVR). Residues 444–464 (IGLFSVLYTVPATCVIACYFY) form a helical membrane-spanning segment. Residues 465-502 (ERLNMDYWKILAAQHKCKMNNQTKTLDCLMAASIPAVE) lie on the Extracellular side of the membrane. Asn485 carries N-linked (GlcNAc...) asparagine glycosylation. The chain crosses the membrane as a helical span at residues 503–523 (IFMVKIFMLLVVGITSGMWIW). Residues 524 to 581 (TSKTLQSWQQVCSRRLKKKSRRKPASVITSGGIYKKAQHPQKTHHGKYEIPAQSPTCV) lie on the Cytoplasmic side of the membrane. The Lys-Thr-X-X-X-Trp motif, mediates interaction with the PDZ domain of Dvl family members motif lies at 526–531 (KTLQSW). A disordered region spans residues 560–581 (AQHPQKTHHGKYEIPAQSPTCV). The short motif at 579-581 (TCV) is the PDZ-binding element.

Belongs to the G-protein coupled receptor Fz/Smo family. Interacts with WNT7B. Interacts with MYOC. Post-translationally, ubiquitinated by ZNRF3, leading to its degradation by the proteasome. As to expression, highest levels in the placenta and fetal kidney, followed by fetal lung and brain. In adult brain, abundantly expressed in the cerebellum, followed by cerebral cortex, medulla and spinal cord; very low levels in total brain, frontal lobe, temporal lobe and putamen. Weak expression detected in adult brain, heart, lung, skeletal muscle, pancreas, spleen and prostate.

It is found in the cell membrane. Its function is as follows. Receptor for Wnt proteins. Functions in the canonical Wnt/beta-catenin signaling pathway. The canonical Wnt/beta-catenin signaling pathway leads to the activation of disheveled proteins, inhibition of GSK-3 kinase, nuclear accumulation of beta-catenin and activation of Wnt target genes. A second signaling pathway involving PKC and calcium fluxes has been seen for some family members, but it is not yet clear if it represents a distinct pathway or if it can be integrated in the canonical pathway, as PKC seems to be required for Wnt-mediated inactivation of GSK-3 kinase. Both pathways seem to involve interactions with G-proteins. May be involved in transduction and intercellular transmission of polarity information during tissue morphogenesis and/or in differentiated tissues. The polypeptide is Frizzled-10 (FZD10) (Homo sapiens (Human)).